Reading from the N-terminus, the 168-residue chain is Large ribosomal subunit protein uL10 (168 aa).

Belongs to the universal ribosomal protein uL10 family. Part of the ribosomal stalk of the 50S ribosomal subunit. The N-terminus interacts with L11 and the large rRNA to form the base of the stalk. The C-terminus forms an elongated spine to which L12 dimers bind in a sequential fashion forming a multimeric L10(L12)X complex.

Forms part of the ribosomal stalk, playing a central role in the interaction of the ribosome with GTP-bound translation factors. The chain is Large ribosomal subunit protein uL10 from Ralstonia nicotianae (strain ATCC BAA-1114 / GMI1000) (Ralstonia solanacearum).